The following is a 239-amino-acid chain: DNA oxidative demethylase ALKBH2 (239 aa).

The PCNA-binding signature appears at K3 to R7. Residues R11–S32 are disordered. Substrate contacts are provided by residues F80–K82 and Y100–F102. In terms of domain architecture, Fe2OG dioxygenase spans T130 to L235. Residues N137, Y139, and H149 each coordinate 2-oxoglutarate. The Fe cation site is built by H149 and D151. D152 serves as a coordination point for substrate. Positions 214, 226, 230, and 232 each coordinate 2-oxoglutarate. H214 contributes to the Fe cation binding site.

Belongs to the alkB family. As to quaternary structure, interacts with PCNA homotrimer; this interaction is enhanced during the S-phase of the cell cycle. Interacts with nucleolar proteins NCL, UBTF and NPM1. Interacts with XRCC5-XRCC6 heterodimer. Requires Fe(2+) as cofactor. In terms of tissue distribution, detected in liver, testis and kidney (at protein level). Detected in heart and testis.

Its subcellular location is the nucleus. The protein resides in the nucleolus. It is found in the nucleoplasm. It carries out the reaction a methylated nucleobase within DNA + 2-oxoglutarate + O2 = a nucleobase within DNA + formaldehyde + succinate + CO2. The catalysed reaction is an N(1)-methyl-2'-deoxyadenosine in double-stranded DNA + 2-oxoglutarate + O2 = a 2'-deoxyadenosine in double-stranded DNA + formaldehyde + succinate + CO2 + H(+). It catalyses the reaction an N(1)-methyl-2'-deoxyadenosine in single-stranded DNA + 2-oxoglutarate + O2 = a 2'-deoxyadenosine in single-stranded DNA + formaldehyde + succinate + CO2 + H(+). The enzyme catalyses an N(3)-methyl-2'-deoxycytidine in double-stranded DNA + 2-oxoglutarate + O2 = a 2'-deoxycytidine in double-stranded DNA + formaldehyde + succinate + CO2 + H(+). It carries out the reaction an N(3)-methyl-2'-deoxycytidine in single-stranded DNA + 2-oxoglutarate + O2 = a 2'-deoxycytidine in single-stranded DNA + formaldehyde + succinate + CO2 + H(+). The catalysed reaction is a 1,N(6)-etheno-2'-deoxyadenosine in double-stranded DNA + 2-oxoglutarate + O2 + H2O = a 2'-deoxyadenosine in double-stranded DNA + glyoxal + succinate + CO2. It catalyses the reaction a 1,N(6)-etheno-2'-deoxyadenosine in single-stranded DNA + 2-oxoglutarate + O2 + H2O = a 2'-deoxyadenosine in single-stranded DNA + glyoxal + succinate + CO2. The enzyme catalyses a 3,N(4)-etheno-2'-deoxycytidine in double-stranded DNA + 2-oxoglutarate + O2 + H2O = a 2'-deoxycytidine in double-stranded DNA + glyoxal + succinate + CO2. It carries out the reaction a 3,N(4)-etheno-2'-deoxycytidine in single-stranded DNA + 2-oxoglutarate + O2 + H2O = a 2'-deoxycytidine in single-stranded DNA + glyoxal + succinate + CO2. The catalysed reaction is a 1,N(2)-etheno-2'-deoxyguanosine in double-stranded DNA + 2-oxoglutarate + O2 + H2O = a 2'-deoxyguanosine in double-stranded DNA + glyoxal + succinate + CO2. Its activity is regulated as follows. Activated by magnesium ions. Dioxygenase that repairs alkylated nucleic acid bases by direct reversal oxidative dealkylation. Can process both double-stranded (ds) and single-stranded (ss) DNA substrates, with a strong preference for dsDNA. Uses molecular oxygen, 2-oxoglutarate and iron as cofactors to oxidize the alkyl groups that are subsequently released as aldehydes, regenerating the undamaged bases. Probes the base pair stability, locates a weakened base pair and flips the damaged base to accommodate the lesion in its active site for efficient catalysis. Repairs monoalkylated bases, specifically N1-methyladenine and N3-methylcytosine, as well as higher order alkyl adducts such as bases modified with exocyclic bridged adducts known as etheno adducts including 1,N6-ethenoadenine, 3,N4-ethenocytosine and 1,N2-ethenoguanine. Acts as a gatekeeper of genomic integrity under alkylation stress. Efficiently repairs alkylated lesions in ribosomal DNA (rDNA). These lesions can cause ss- and dsDNA strand breaks that severely impair rDNA transcription. In a response mechanism to DNA damage, associates with PCNA at replication forks to repair alkylated adducts prior to replication. The protein is DNA oxidative demethylase ALKBH2 (Alkbh2) of Mus musculus (Mouse).